We begin with the raw amino-acid sequence, 45 residues long: ANCSCSTASDYCPILTFCTTGTACSYTPTGCGTGWVYCACNGNFY.

Its function is as follows. Bacteriocin. In Myxococcus fulvus, this protein is Bacteriocin fulvocin-C.